An 885-amino-acid polypeptide reads, in one-letter code: Probable alpha-glucosidase Os06g0675700 (885 aa).

A signal peptide spans 1-33 (MMGSPPAPPARRLGALAVFLLALFLAAPWGVDC). 3 N-linked (GlcNAc...) asparagine glycosylation sites follow: Asn-195, Asn-378, and Asn-397. Active-site residues include Asp-443 and Glu-446. N-linked (GlcNAc...) asparagine glycans are attached at residues Asn-467 and Asn-477. Asp-540 functions as the Proton donor in the catalytic mechanism. N-linked (GlcNAc...) asparagine glycans are attached at residues Asn-576 and Asn-844.

It belongs to the glycosyl hydrolase 31 family.

It carries out the reaction Hydrolysis of terminal, non-reducing (1-&gt;4)-linked alpha-D-glucose residues with release of alpha-D-glucose.. This is Probable alpha-glucosidase Os06g0675700 from Oryza sativa subsp. japonica (Rice).